Reading from the N-terminus, the 331-residue chain is Tetraspanin-10 (331 aa).

The segment at 1–34 (MKEEECSPLLSQDTAGREHPLTRNSPPTANIPCP) is disordered. Topologically, residues 1 to 76 (MKEEECSPLL…LSTGSNCVKY (76 aa)) are cytoplasmic. The chain crosses the membrane as a helical span at residues 77–97 (LIFLSNFLFSLPSLLALAAGL). Over 98–120 (WGLTVKRSQGIGWGGPVPTDPML) the chain is Extracellular. The helical transmembrane segment at 121–141 (MLVLGGLVVSVVSLSGCLGAF) threads the bilayer. At 142-152 (CENSCLLHWYC) the chain is on the cytoplasmic side. The chain crosses the membrane as a helical span at residues 153–173 (GAVLFCLALEALAGVLMVTLW). The Extracellular segment spans residues 174 to 331 (KPLQDSLKYT…AAEDIEAGPL (158 aa)). 4 disulfide bridges follow: Cys-210–Cys-277, Cys-211–Cys-241, Cys-227–Cys-235, and Cys-242–Cys-256. Asn-226 carries an N-linked (GlcNAc...) asparagine glycan.

The protein belongs to the tetraspanin (TM4SF) family. In terms of assembly, interacts with ADAM10.

It is found in the cell membrane. Its function is as follows. Part of TspanC8 subgroup, composed of 6 members that interact with the transmembrane metalloprotease ADAM10. This interaction is required for ADAM10 exit from the endoplasmic reticulum and for enzymatic maturation and trafficking to the cell surface as well as substrate specificity. Different TspanC8/ADAM10 complexes have distinct substrates. The protein is Tetraspanin-10 (Tspan10) of Mus musculus (Mouse).